The following is a 156-amino-acid chain: Small ribosomal subunit protein uS7 (156 aa).

The protein belongs to the universal ribosomal protein uS7 family. As to quaternary structure, part of the 30S ribosomal subunit. Contacts proteins S9 and S11.

Its function is as follows. One of the primary rRNA binding proteins, it binds directly to 16S rRNA where it nucleates assembly of the head domain of the 30S subunit. Is located at the subunit interface close to the decoding center, probably blocks exit of the E-site tRNA. This Bacillus cereus (strain B4264) protein is Small ribosomal subunit protein uS7.